The primary structure comprises 310 residues: Phosphoribosylaminoimidazole-succinocarboxamide synthase (310 aa).

Belongs to the SAICAR synthetase family.

The enzyme catalyses 5-amino-1-(5-phospho-D-ribosyl)imidazole-4-carboxylate + L-aspartate + ATP = (2S)-2-[5-amino-1-(5-phospho-beta-D-ribosyl)imidazole-4-carboxamido]succinate + ADP + phosphate + 2 H(+). It participates in purine metabolism; IMP biosynthesis via de novo pathway; 5-amino-1-(5-phospho-D-ribosyl)imidazole-4-carboxamide from 5-amino-1-(5-phospho-D-ribosyl)imidazole-4-carboxylate: step 1/2. In Dechloromonas aromatica (strain RCB), this protein is Phosphoribosylaminoimidazole-succinocarboxamide synthase.